We begin with the raw amino-acid sequence, 2511 residues long: Chromodomain-helicase-DNA-binding protein 8 (2511 aa).

A disordered region spans residues 484–615 (PRVLNQDELP…RSNRQVKRKK (132 aa)). Residues 515–524 (GGGVGGGGGG) are compositionally biased toward gly residues. Basic residues predominate over residues 604–615 (KRRSNRQVKRKK). Chromo domains are found at residues 680-745 (AIVD…AQMR) and 760-826 (VEVD…RTPR). Positions 859–1033 (LFNWYNRQNC…FSLLHFLEPA (175 aa)) constitute a Helicase ATP-binding domain. An ATP-binding site is contributed by 872–879 (DEMGLGKT). Positions 984 to 987 (DEAH) match the DEAH box motif. In terms of domain architecture, Helicase C-terminal spans 1174–1330 (LLDKLLPRLK…SMSGNKESSI (157 aa)). Disordered stretches follow at residues 1440–1482 (TRQF…HSGG), 1715–1736 (EQQAADPELGEGGDYDKYSEDP), 2086–2168 (SKNN…LTDP), and 2468–2511 (PSAL…SSED). The span at 1452–1461 (DLSDLDSDDD) shows a compositional bias: acidic residues. A compositionally biased stretch (low complexity) spans 2111 to 2125 (DSGSSSSSRHSGSSD).

The protein belongs to the SNF2/RAD54 helicase family. CHD8 subfamily. In terms of assembly, component of some MLL1/MLL complex.

It localises to the nucleus. It carries out the reaction ATP + H2O = ADP + phosphate + H(+). Its function is as follows. ATP-dependent chromatin-remodeling factor, it slides nucleosomes along DNA; nucleosome sliding requires ATP. Acts as a transcription repressor by remodeling chromatin structure and recruiting histone H1 to target genes. Suppresses p53/tp53-mediated apoptosis by recruiting histone H1 and preventing p53/tp53 transactivation activity. Acts as a negative regulator of Wnt signaling pathway by regulating beta-catenin (ctnnb1) activity. Negatively regulates ctnnb1-targeted gene expression by being recruited specifically to the promoter regions of several ctnnb1 responsive genes. May also act as a transcription activator by participating in efficient U6 RNA polymerase III transcription. The sequence is that of Chromodomain-helicase-DNA-binding protein 8 from Danio rerio (Zebrafish).